The chain runs to 501 residues: Aspartate--tRNA ligase, cytoplasmic (501 aa).

The residue at position 52 (threonine 52) is a Phosphothreonine. Lysine 74 carries the post-translational modification N6-acetyllysine. An L-aspartate-binding site is contributed by glutamate 229. The residue at position 249 (serine 249) is a Phosphoserine. The aspartate stretch occupies residues 251-254 (QLYK). An L-aspartate-binding site is contributed by arginine 273. Residues 273–275 (RAE) and 281–283 (RHL) each bind ATP. Lysine 374 carries the post-translational modification N6-acetyllysine. A binding site for the 3'-end of tRNA region spans residues 411–415 (KQSNS). Glutamate 424 provides a ligand contact to ATP. 2 residues coordinate L-aspartate: serine 427 and arginine 431. 472 to 475 (GLER) is an ATP binding site. Residue threonine 500 is modified to Phosphothreonine; by PKA.

It belongs to the class-II aminoacyl-tRNA synthetase family. Type 2 subfamily. In terms of assembly, homodimer. Part of a multisubunit complex that groups tRNA ligases for Arg (RARS1), Asp (DARS1), Gln (QARS1), Ile (IARS1), Leu (LARS1), Lys (KARS1), Met (MARS1) the bifunctional ligase for Glu and Pro (EPRS1) and the auxiliary subunits AIMP1/p43, AIMP2/p38 and EEF1E1/p18. In terms of tissue distribution, expression in the developing and adult brain shows similar patterns. Highly expressed in the ventricular and subventricular zones, including hippocampal subfields, the midlateral temporal cortex and the frontal polar cortex. The cerebellum, cerebral cortex, hippocampus, and lateral ventricle show preferential neuronal expression. Expression in the peripheral neurons is evident in the colon.

It localises to the cytoplasm. It is found in the cytosol. It catalyses the reaction tRNA(Asp) + L-aspartate + ATP = L-aspartyl-tRNA(Asp) + AMP + diphosphate. Catalyzes the specific attachment of an amino acid to its cognate tRNA in a 2 step reaction: the amino acid (AA) is first activated by ATP to form AA-AMP and then transferred to the acceptor end of the tRNA. In Homo sapiens (Human), this protein is Aspartate--tRNA ligase, cytoplasmic.